Here is a 346-residue protein sequence, read N- to C-terminus: Tyrosine--tRNA ligase (346 aa).

The 'HIGH' region motif lies at 47–56 (PSGRIHIAQA). Positions 230-234 (KMSKS) match the 'KMSKS' region motif. Residue Lys233 participates in ATP binding.

Belongs to the class-I aminoacyl-tRNA synthetase family. As to quaternary structure, homodimer.

It catalyses the reaction tRNA(Tyr) + L-tyrosine + ATP = L-tyrosyl-tRNA(Tyr) + AMP + diphosphate + H(+). In terms of biological role, catalyzes the attachment of tyrosine to tRNA(Tyr) in a two-step reaction: tyrosine is first activated by ATP to form Tyr-AMP and then transferred to the acceptor end of tRNA(Tyr). The protein is Tyrosine--tRNA ligase (YARS) of Acanthamoeba polyphaga (Amoeba).